Reading from the N-terminus, the 337-residue chain is DNA-directed RNA polymerase subunit alpha (337 aa).

Residues 1 to 233 (MIQKNWQELI…DQLSIFVNFE (233 aa)) form an alpha N-terminal domain (alpha-NTD) region. An alpha C-terminal domain (alpha-CTD) region spans residues 249-337 (FNPVLLKKVD…DLAKRYEDQY (89 aa)).

The protein belongs to the RNA polymerase alpha chain family. In terms of assembly, homodimer. The RNAP catalytic core consists of 2 alpha, 1 beta, 1 beta' and 1 omega subunit. When a sigma factor is associated with the core the holoenzyme is formed, which can initiate transcription.

The catalysed reaction is RNA(n) + a ribonucleoside 5'-triphosphate = RNA(n+1) + diphosphate. DNA-dependent RNA polymerase catalyzes the transcription of DNA into RNA using the four ribonucleoside triphosphates as substrates. The protein is DNA-directed RNA polymerase subunit alpha of Brucella canis (strain ATCC 23365 / NCTC 10854 / RM-666).